The following is a 148-amino-acid chain: Cyanate hydratase (148 aa).

Residues arginine 89, glutamate 92, and serine 115 contribute to the active site.

The protein belongs to the cyanase family.

It carries out the reaction cyanate + hydrogencarbonate + 3 H(+) = NH4(+) + 2 CO2. Its function is as follows. Catalyzes the reaction of cyanate with bicarbonate to produce ammonia and carbon dioxide. In Sulfurisphaera tokodaii (strain DSM 16993 / JCM 10545 / NBRC 100140 / 7) (Sulfolobus tokodaii), this protein is Cyanate hydratase.